A 150-amino-acid chain; its full sequence is MKVVFLEDVKGRGKKGEIKEVPDGYANNFLIKNKKAEPATGKNLGAVKGRQKAEEKAAAEELAEARKLADFFANEKTVVELTGKSGTDGRLFGAVSTKQIAAALEKQYQIKIDKRKMELNQPIHALGYTDVPVKLHREVTAQLRVHVSEG.

It belongs to the bacterial ribosomal protein bL9 family.

Binds to the 23S rRNA. This is Large ribosomal subunit protein bL9 from Leuconostoc mesenteroides subsp. mesenteroides (strain ATCC 8293 / DSM 20343 / BCRC 11652 / CCM 1803 / JCM 6124 / NCDO 523 / NBRC 100496 / NCIMB 8023 / NCTC 12954 / NRRL B-1118 / 37Y).